The following is a 162-amino-acid chain: Crossover junction endodeoxyribonuclease RuvC (162 aa).

Residues Asp-8, Glu-69, and His-141 contribute to the active site. Mg(2+) is bound by residues Asp-8, Glu-69, and His-141.

Belongs to the RuvC family. Homodimer which binds Holliday junction (HJ) DNA. The HJ becomes 2-fold symmetrical on binding to RuvC with unstacked arms; it has a different conformation from HJ DNA in complex with RuvA. In the full resolvosome a probable DNA-RuvA(4)-RuvB(12)-RuvC(2) complex forms which resolves the HJ. Mg(2+) serves as cofactor.

Its subcellular location is the cytoplasm. The catalysed reaction is Endonucleolytic cleavage at a junction such as a reciprocal single-stranded crossover between two homologous DNA duplexes (Holliday junction).. In terms of biological role, the RuvA-RuvB-RuvC complex processes Holliday junction (HJ) DNA during genetic recombination and DNA repair. Endonuclease that resolves HJ intermediates. Cleaves cruciform DNA by making single-stranded nicks across the HJ at symmetrical positions within the homologous arms, yielding a 5'-phosphate and a 3'-hydroxyl group; requires a central core of homology in the junction. The consensus cleavage sequence is 5'-(A/T)TT(C/G)-3'. Cleavage occurs on the 3'-side of the TT dinucleotide at the point of strand exchange. HJ branch migration catalyzed by RuvA-RuvB allows RuvC to scan DNA until it finds its consensus sequence, where it cleaves and resolves the cruciform DNA. The protein is Crossover junction endodeoxyribonuclease RuvC of Wolbachia sp. subsp. Brugia malayi (strain TRS).